Reading from the N-terminus, the 209-residue chain is Orotate phosphoribosyltransferase (209 aa).

Residues Arg-96, Lys-100, His-102, and Glu-122–Ser-130 contribute to the 5-phospho-alpha-D-ribose 1-diphosphate site. Ser-126 provides a ligand contact to orotate.

This sequence belongs to the purine/pyrimidine phosphoribosyltransferase family. PyrE subfamily. In terms of assembly, homodimer. It depends on Mg(2+) as a cofactor.

The catalysed reaction is orotidine 5'-phosphate + diphosphate = orotate + 5-phospho-alpha-D-ribose 1-diphosphate. The protein operates within pyrimidine metabolism; UMP biosynthesis via de novo pathway; UMP from orotate: step 1/2. Its function is as follows. Catalyzes the transfer of a ribosyl phosphate group from 5-phosphoribose 1-diphosphate to orotate, leading to the formation of orotidine monophosphate (OMP). This is Orotate phosphoribosyltransferase from Cytophaga hutchinsonii (strain ATCC 33406 / DSM 1761 / CIP 103989 / NBRC 15051 / NCIMB 9469 / D465).